Consider the following 213-residue polypeptide: Uridine kinase (213 aa).

Residue 15-22 coordinates ATP; that stretch reads GASASGKS.

Belongs to the uridine kinase family.

The protein localises to the cytoplasm. The catalysed reaction is uridine + ATP = UMP + ADP + H(+). It carries out the reaction cytidine + ATP = CMP + ADP + H(+). It participates in pyrimidine metabolism; CTP biosynthesis via salvage pathway; CTP from cytidine: step 1/3. It functions in the pathway pyrimidine metabolism; UMP biosynthesis via salvage pathway; UMP from uridine: step 1/1. This chain is Uridine kinase, found in Cronobacter sakazakii (strain ATCC BAA-894) (Enterobacter sakazakii).